The sequence spans 439 residues: Elongation factor 1-alpha 2 (439 aa).

The 224-residue stretch at 6-229 (KDHLNLVVIG…DEFKVPKRPI (224 aa)) folds into the tr-type G domain. The G1 stretch occupies residues 15-22 (GHVDSGKS). 15–22 (GHVDSGKS) contacts GTP. The segment at 71–75 (GITIN) is G2. The tract at residues 92-95 (DAPG) is G3. GTP contacts are provided by residues 92–96 (DAPGH) and 154–157 (NKMD). The segment at 154–157 (NKMD) is G4. The interval 193 to 195 (SGF) is G5.

Belongs to the TRAFAC class translation factor GTPase superfamily. Classic translation factor GTPase family. EF-Tu/EF-1A subfamily.

The protein resides in the cytoplasm. This protein promotes the GTP-dependent binding of aminoacyl-tRNA to the A-site of ribosomes during protein biosynthesis. In Euplotes crassus, this protein is Elongation factor 1-alpha 2 (EFA2).